The primary structure comprises 308 residues: Ferrochelatase (308 aa).

Residues H167 and E239 each contribute to the Fe cation site.

Belongs to the ferrochelatase family.

The protein localises to the cytoplasm. It catalyses the reaction heme b + 2 H(+) = protoporphyrin IX + Fe(2+). The protein operates within porphyrin-containing compound metabolism; protoheme biosynthesis; protoheme from protoporphyrin-IX: step 1/1. Its function is as follows. Catalyzes the ferrous insertion into protoporphyrin IX. This is Ferrochelatase from Thermoplasma acidophilum (strain ATCC 25905 / DSM 1728 / JCM 9062 / NBRC 15155 / AMRC-C165).